A 472-amino-acid polypeptide reads, in one-letter code: MNGYGSPYLYMGGPVSQPPRAPLQRTPKCARCRNHGVLSWLKGHKRYCRFKDCTCEKCILIIERQRVMAAQVALRRQQANESLESLIPDSLRALPGPPPPGDAVAAPQPPPASQPSQPQPPRPAAELAAAAALRWTAEPQPGALQAQLAKPDLTEERLGDGKSADNTEVFSDKDTDQRSSPDVAKSKGCFTPESPEIVSVEEGGYAVQKNGGNPESRPDSPKCHAEQNHLLIEGPSGTVSLPFSLKANRPPLEVLKKIFPNQKPTVLELILKGCGGDLVSAVEVLLSSRSSVTGAERTSAEPESLALPSNGHIFEHTLSSYPISSSKWSVGSAFRVPDTLRFSADSSNVVPSPLAGPLQPPFPQPPRYPLMLRNTLARSQSSPFLPNDVTLWNTMTLQQQYQLRSQYVSPFPSNSTSVFRSSPVLPARATEDPRISIPDDGCPFVSKQSIYTEDDYDERSDSSDSRTLNTSS.

Residues 29-76 (CARCRNHGVLSWLKGHKRYCRFKDCTCEKCILIIERQRVMAAQVALRR) constitute a DNA-binding region (DM). Disordered stretches follow at residues 89 to 128 (DSLR…AELA) and 155 to 191 (EERL…GCFT). Pro residues predominate over residues 95 to 123 (PGPPPPGDAVAAPQPPPASQPSQPQPPRP). A compositionally biased stretch (basic and acidic residues) spans 155–179 (EERLGDGKSADNTEVFSDKDTDQRS). The DMA domain maps to 249 to 284 (RPPLEVLKKIFPNQKPTVLELILKGCGGDLVSAVEV). Residues 430–472 (TEDPRISIPDDGCPFVSKQSIYTEDDYDERSDSSDSRTLNTSS) are disordered.

Belongs to the DMRT family. In terms of assembly, may homodimerize. Expressed in testis.

The protein resides in the nucleus. In terms of biological role, probable transcription factor that plays a role in configuring the spinal circuits controlling stride in vertebrates. Involved in neuronal specification within specific subdivision of spinal cord neurons and in the development of a coordinated locomotor network controlling limb movements. May regulate transcription during sexual development. In Homo sapiens (Human), this protein is Doublesex- and mab-3-related transcription factor 3 (DMRT3).